Here is a 752-residue protein sequence, read N- to C-terminus: Peptidyl-prolyl cis-trans isomerase G (752 aa).

Residues 11 to 176 form the PPIase cyclophilin-type domain; it reads FFDIAINNQP…AEVRILSCGE (166 aa). Positions 182–193 are enriched in basic residues; the sequence is KVKKEEKKRHKS. The interval 182–752 is disordered; sequence KVKKEEKKRH…SPGTDEDKSG (571 aa). The segment covering 194 to 214 has biased composition (low complexity); that stretch reads SSSSSSSDSDSSSDSQSSSDS. Residues 226–251 show a composition bias toward basic residues; that stretch reads RKRKKKHRKNSRKHKKEKKKRKKSKK. 5 positions are modified to phosphoserine: serine 252, serine 254, serine 255, serine 257, and serine 288. Over residues 290-308 the composition is skewed to basic and acidic residues; the sequence is PKADDKERKNREREREREC. Position 313 is a phosphoserine (serine 313). Residues 327-345 show a composition bias toward basic residues; sequence FGRKIKGRGPRRYRTPSRS. Basic and acidic residues-rich tracts occupy residues 346–366 and 377–447; these read RSRD…EMQR and RWIK…DKYN. Serine 354 is subject to Phosphoserine. Threonine 356 bears the Phosphothreonine mark. Residue serine 384 is modified to Phosphoserine. Lysine 390 participates in a covalent cross-link: Glycyl lysine isopeptide (Lys-Gly) (interchain with G-Cter in SUMO2). Residues serine 395, serine 411, and serine 413 each carry the phosphoserine modification. The span at 448-461 shows a compositional bias: basic residues; the sequence is KNKVKKRGKSKSRS. Basic and acidic residues-rich tracts occupy residues 462-552 and 577-598; these read KSKE…DLTK and RSHD…QEYR. A compositionally biased stretch (basic residues) spans 599 to 625; sequence RRGRSRSRDRRTPGRSRSKDRRRRRRD. A compositionally biased stretch (basic and acidic residues) spans 626-682; the sequence is SRSSEREESQSRNKEKYRSQDSKSSHRKENSEGEKRMYSKSRDHSSSNNNREKKADI. Phosphoserine occurs at positions 685 and 688. The segment covering 685-705 has biased composition (polar residues); sequence SPVSKTKQSSQDNEVKSSTLK. Residue lysine 691 forms a Glycyl lysine isopeptide (Lys-Gly) (interchain with G-Cter in SUMO2) linkage. Serine 694, serine 742, and serine 743 each carry phosphoserine. Residues 706-752 show a composition bias toward basic and acidic residues; that stretch reads NQEDEKTRSPVEKENQKSKGQENDHVHDKNKKCDHESSPGTDEDKSG. Threonine 746 is modified (phosphothreonine). Serine 751 carries the phosphoserine modification.

As to quaternary structure, interacts with CLK1, PNN and with the phosphorylated C-terminal domain of RNA polymerase II.

The protein localises to the nucleus matrix. It is found in the nucleus speckle. The enzyme catalyses [protein]-peptidylproline (omega=180) = [protein]-peptidylproline (omega=0). With respect to regulation, inhibited by cyclosporin A (CsA). Functionally, PPIase that catalyzes the cis-trans isomerization of proline imidic peptide bonds in oligopeptides and may therefore assist protein folding. May be implicated in the folding, transport, and assembly of proteins. May play an important role in the regulation of pre-mRNA splicing. This is Peptidyl-prolyl cis-trans isomerase G (Ppig) from Rattus norvegicus (Rat).